The chain runs to 61 residues: Protein A40 homolog (61 aa).

Residues 1–11 lie on the Cytoplasmic side of the membrane; that stretch reads MTMNKPKTNYA. The chain crosses the membrane as a helical; Signal-anchor for type II membrane protein span at residues 12–32; the sequence is GYACCVICGLIVGIIFTATLL. Over 33 to 61 the chain is Extracellular; sequence KAVERKLIHTPLIDKTIKDAYIREDCPTD.

This sequence belongs to the poxviridae A40 protein family.

It localises to the host membrane. The polypeptide is Protein A40 homolog (A45R) (Homo sapiens (Human)).